A 411-amino-acid chain; its full sequence is Argininosuccinate synthase (411 aa).

Residues Ala10 to Ser18 and Ala37 each bind ATP. L-citrulline contacts are provided by Tyr89 and Ser94. Gly119 contributes to the ATP binding site. Positions 121, 125, and 126 each coordinate L-aspartate. Asn125 contributes to the L-citrulline binding site. L-citrulline contacts are provided by Arg129, Ser178, Ser187, Glu263, and Tyr275.

The protein belongs to the argininosuccinate synthase family. Type 1 subfamily. In terms of assembly, homotetramer.

It localises to the cytoplasm. It carries out the reaction L-citrulline + L-aspartate + ATP = 2-(N(omega)-L-arginino)succinate + AMP + diphosphate + H(+). It functions in the pathway amino-acid biosynthesis; L-arginine biosynthesis; L-arginine from L-ornithine and carbamoyl phosphate: step 2/3. This is Argininosuccinate synthase from Aeromonas salmonicida (strain A449).